The primary structure comprises 685 residues: MSDAKNNLLLFFDRPSEPCFMQKGEENAVFEIPDNYYPEKYQRVSNAIGNRFGSDAGRMIPIRNIALPNLDLPMELPYNEQFSLFVPKHRKLAGRLIDIFMGMRDVEDLQSVCSYCQLRINPYMFNYCLSVAILHRPDTKGLSIPTFAESFPDKFMDPKVFRQAREVSSVVPSGARMPIVIPSNYTASDTEPEQRVAYFREDIGINLHHWHWHLVYPFDAADRAIVNKDRRGELFYYMHQQIIARYNVERMCNNLSRVRRYNNFRAAIEEGYFPKLDSTVASRAWPPRFAGTTIRDLDRPVDQIRSDVSELETWRDRFLQAIENMSVMLPNGRQLPLDEETGIDVLGNLMESSIISRNRPYYGDLHNMGHVFISYSHDPDHRHLEQFGVMGDSATAMRDPVFYRWHAYIDDIFHLYKYKLTPYGNDRLDFPNIRVSSVSIEGGGTPNTLNTLWEQSTVDLGRGMDFTPRGSVLARFTHLQHDEYNYVIEVNNTGGSSVMGMFRIFIAPTVDESGKPFSFDEQRKLMIELDKFSQGVKPGNNTIRRKSIDSSVTIPYERTFRNQADRPADPGTAGAAEFDFCGCGWPHHMLVPKGTTQGYPMVLFVMVSNWNDDRVEQDLVGSCNDAASYCGIRDRKYPDRRAMGFPFDRPAPAATTLSDFLRPNMAVRDCIVRFTDRTRQRGQQG.

The propeptide occupies M1–R51. Residue N184 is glycosylated (N-linked (GlcNAc...) asparagine). H209, H213, and H239 together coordinate Cu cation. N-linked (GlcNAc...) asparagine glycans are attached at residues N254 and N324. E351 serves as the catalytic Proton acceptor. Cu cation is bound by residues H366, H370, and H406. N491 and N540 each carry an N-linked (GlcNAc...) asparagine glycan. Disulfide bonds link C581–C623 and C583–C630.

Heterodimer. It depends on Cu(2+) as a cofactor. Post-translationally, the N-terminus is blocked. Synthesized by hemocytes and released into the hemolymph plasma.

It is found in the secreted. It carries out the reaction 2 L-dopa + O2 = 2 L-dopaquinone + 2 H2O. The catalysed reaction is L-tyrosine + O2 = L-dopaquinone + H2O. Its function is as follows. This is a copper-containing oxidase that functions in the formation of pigments such as melanins and other polyphenolic compounds. Catalyzes the rate-limiting conversions of tyrosine to DOPA, DOPA to DOPA-quinone and possibly 5,6 dihydroxyindole to indole-5'6 quinone. In Bombyx mori (Silk moth), this protein is Phenoloxidase subunit 1.